We begin with the raw amino-acid sequence, 149 residues long: 3-dehydroquinate dehydratase (149 aa).

The Proton acceptor role is filled by Tyr26. 3 residues coordinate substrate: Asn77, His83, and Asp90. The active-site Proton donor is His103. Residues 104–105 and Arg114 contribute to the substrate site; that span reads LS.

Belongs to the type-II 3-dehydroquinase family. As to quaternary structure, homododecamer.

It carries out the reaction 3-dehydroquinate = 3-dehydroshikimate + H2O. It participates in metabolic intermediate biosynthesis; chorismate biosynthesis; chorismate from D-erythrose 4-phosphate and phosphoenolpyruvate: step 3/7. Catalyzes a trans-dehydration via an enolate intermediate. This Aliivibrio fischeri (strain MJ11) (Vibrio fischeri) protein is 3-dehydroquinate dehydratase.